Here is a 403-residue protein sequence, read N- to C-terminus: Acetate kinase (403 aa).

Residue asparagine 8 coordinates Mg(2+). Position 15 (lysine 15) interacts with ATP. Arginine 90 serves as a coordination point for substrate. The active-site Proton donor/acceptor is aspartate 147. Residues 207 to 211, 282 to 284, and 330 to 334 contribute to the ATP site; these read HLGSG, DLR, and GVGEN. Residue glutamate 384 coordinates Mg(2+).

This sequence belongs to the acetokinase family. In terms of assembly, homodimer. Mg(2+) is required as a cofactor. It depends on Mn(2+) as a cofactor.

The protein localises to the cytoplasm. The catalysed reaction is acetate + ATP = acetyl phosphate + ADP. It functions in the pathway metabolic intermediate biosynthesis; acetyl-CoA biosynthesis; acetyl-CoA from acetate: step 1/2. Functionally, catalyzes the formation of acetyl phosphate from acetate and ATP. Can also catalyze the reverse reaction. In Exiguobacterium sp. (strain ATCC BAA-1283 / AT1b), this protein is Acetate kinase.